The sequence spans 255 residues: uncharacterized protein (255 aa).

2 consecutive transmembrane segments (helical) span residues 99–119 (ISLI…ITSF) and 146–166 (YIGS…ILFL).

It localises to the mitochondrion membrane. This is an uncharacterized protein from Schizosaccharomyces pombe (strain 972 / ATCC 24843) (Fission yeast).